The following is a 187-amino-acid chain: Protein TfaD (187 aa).

The protein in the C-terminal section; belongs to the tfa family.

The protein is Protein TfaD (tfaD) of Escherichia coli (strain K12).